The sequence spans 56 residues: Cruciferin (56 aa).

A Phosphothreonine modification is found at threonine 45.

The protein belongs to the 11S seed storage protein (globulins) family. As to quaternary structure, hexamer; each subunit is composed of an acidic and a basic chain derived from a single precursor and linked by a disulfide bond.

Functionally, this is a seed storage protein. The chain is Cruciferin from Sinapis alba (White mustard).